Here is a 116-residue protein sequence, read N- to C-terminus: Cell division protein FtsL (116 aa).

The Cytoplasmic segment spans residues 1–24 (MMLTNRQIRVRLFESLKNSFFKKT). The helical transmembrane segment at 25-45 (VGISFALLFILLITAFSLIVV) threads the bilayer. Residues 46 to 116 (RFEYKLQLNE…NEQKEELNNE (71 aa)) are Periplasmic-facing.

Belongs to the FtsL family. Part of a complex composed of FtsB, FtsL and FtsQ.

The protein localises to the cell inner membrane. In terms of biological role, essential cell division protein. May link together the upstream cell division proteins, which are predominantly cytoplasmic, with the downstream cell division proteins, which are predominantly periplasmic. The chain is Cell division protein FtsL from Francisella tularensis subsp. tularensis (strain SCHU S4 / Schu 4).